The primary structure comprises 156 residues: MGRSISVSFGLLVVFLSLSGIGADFDCPSGWSAYDQHCYQAVDEPKSWADAEKFCTEQANGGHLVSIDSKKEANFVAELVSQNIKETRRTDFVWIGLRAEDKRQHCSSEWSDGSSINYQNWIEAESKKCLGLEKQTRYRKWVNLNCGQPYRFTCEI.

A signal peptide spans 1 to 23; it reads MGRSISVSFGLLVVFLSLSGIGA. 3 disulfide bridges follow: cysteine 27–cysteine 38, cysteine 55–cysteine 154, and cysteine 129–cysteine 146. Positions 34–155 constitute a C-type lectin domain; that stretch reads YDQHCYQAVD…CGQPYRFTCE (122 aa).

Belongs to the snaclec family. As to quaternary structure, heterodimer; disulfide-linked. Expressed by the venom gland.

Its subcellular location is the secreted. Functionally, interferes with one step of hemostasis (modulation of platelet aggregation, or coagulation cascade, for example). The chain is Snaclec A10 from Macrovipera lebetinus (Levantine viper).